Consider the following 231-residue polypeptide: Secreted LysM effector LysM13 (231 aa).

The signal sequence occupies residues 1–19; sequence MVFLSLKYALSGLAATAAA. Residues asparagine 30, asparagine 34, asparagine 77, asparagine 100, asparagine 130, asparagine 201, and asparagine 226 are each glycosylated (N-linked (GlcNAc...) asparagine). Residues 38–82 form the LysM domain; that stretch reads TTYTTTSEDTIFTVARKFDRGPCDIARYNRMIDAEHIFANFTLRI.

The protein belongs to the secreted LysM effector family.

It is found in the secreted. In terms of biological role, secreted LysM effector that might have a role in sequestration of chitin oligosaccharides (breakdown products of fungal cell walls that are released during invasion and act as triggers of host immunity) to dampen host defense. The chain is Secreted LysM effector LysM13 from Penicillium expansum (Blue mold rot fungus).